A 347-amino-acid chain; its full sequence is Olfactory receptor 2M2 (347 aa).

Residues 1–25 are Extracellular-facing; sequence MAWENQTFNSDFILLGIFNHSPPHT. Asn5 is a glycosylation site (N-linked (GlcNAc...) asparagine). Residues 26-49 traverse the membrane as a helical segment; it reads FLFFLVLGIFLVAFMGNSVMVLLI. Residues 50–57 are Cytoplasmic-facing; the sequence is YLDTQLHT. A helical transmembrane segment spans residues 58–79; that stretch reads PMYFLLSQLSLMDLMLICTTVP. The Extracellular portion of the chain corresponds to 80–100; the sequence is KMAFNYLSGSKSISMAGCVTQ. A disulfide bridge connects residues Cys97 and Cys189. Residues 101–120 form a helical membrane-spanning segment; the sequence is IFFYISLSGSECFLLAVMAY. Over 121 to 139 the chain is Cytoplasmic; it reads DRYIAICHPLRYTNLMNPK. A helical transmembrane segment spans residues 140 to 158; sequence ICGLMATFSWILGSTDGII. Topologically, residues 159-195 are extracellular; sequence DAVATFSFSFCGSREIAHFFCEFPSLLILSCNDTSIF. The N-linked (GlcNAc...) asparagine glycan is linked to Asn190. Residues 196-219 form a helical membrane-spanning segment; the sequence is EEVIFICCIVMLVFPVAIIIASYA. Topologically, residues 220 to 236 are cytoplasmic; the sequence is RVILAVIHMGSGEGRCK. Residues 237 to 259 traverse the membrane as a helical segment; the sequence is AFTTCSSHLMVVGMYYGAALFMY. Residues 260–272 lie on the Extracellular side of the membrane; that stretch reads IRPTSDHSPTQDK. The chain crosses the membrane as a helical span at residues 273 to 292; the sequence is MVSVFYTILTPMLNPLIYSL. Over 293-347 the chain is Cytoplasmic; it reads RNKEVTRAFMKILGKGKSESELPHKLYVLLFAKFFFLISIFFYDVKILALIMYIA.

It belongs to the G-protein coupled receptor 1 family.

It localises to the cell membrane. Odorant receptor. This is Olfactory receptor 2M2 (OR2M2) from Homo sapiens (Human).